The following is a 349-amino-acid chain: Glycerol-3-phosphate dehydrogenase [NAD(P)+] (349 aa).

3 residues coordinate NADPH: Ser12, Trp13, and Lys107. Sn-glycerol 3-phosphate contacts are provided by Lys107, Gly138, and Ser140. Ala142 lines the NADPH pocket. Positions 193, 246, 256, 257, and 258 each coordinate sn-glycerol 3-phosphate. Catalysis depends on Lys193, which acts as the Proton acceptor. Arg257 contacts NADPH. The NADPH site is built by Val281 and Glu283.

It belongs to the NAD-dependent glycerol-3-phosphate dehydrogenase family.

Its subcellular location is the cytoplasm. The catalysed reaction is sn-glycerol 3-phosphate + NAD(+) = dihydroxyacetone phosphate + NADH + H(+). The enzyme catalyses sn-glycerol 3-phosphate + NADP(+) = dihydroxyacetone phosphate + NADPH + H(+). Its pathway is membrane lipid metabolism; glycerophospholipid metabolism. In terms of biological role, catalyzes the reduction of the glycolytic intermediate dihydroxyacetone phosphate (DHAP) to sn-glycerol 3-phosphate (G3P), the key precursor for phospholipid synthesis. In Pelotomaculum thermopropionicum (strain DSM 13744 / JCM 10971 / SI), this protein is Glycerol-3-phosphate dehydrogenase [NAD(P)+].